Reading from the N-terminus, the 355-residue chain is Homeobox protein knotted-1-like LET6 (355 aa).

Residues 75–96 are disordered; the sequence is PFMDNNNNNNPQEDNNSSSSSI. The segment covering 79–96 has biased composition (low complexity); the sequence is NNNNNNPQEDNNSSSSSI. One can recognise an ELK domain in the interval 237–257; sequence ELKGQLLRKYSGYLGSLKQEF. The segment at residues 258–321 is a DNA-binding region (homeobox; TALE-type); it reads MKKRKKGKLP…NQRKRHWKPS (64 aa).

It belongs to the TALE/KNOX homeobox family. As to expression, expressed in developing lateral organs and developing ovaries in flowers.

It is found in the nucleus. Functionally, may have a role to play in formative events in ovule and embryo morphogenesis. Probably binds to the DNA sequence 5'-TGAC-3'. The polypeptide is Homeobox protein knotted-1-like LET6 (LET6) (Solanum lycopersicum (Tomato)).